Consider the following 129-residue polypeptide: Putative pre-16S rRNA nuclease (129 aa).

The protein belongs to the YqgF nuclease family.

The protein resides in the cytoplasm. Its function is as follows. Could be a nuclease involved in processing of the 5'-end of pre-16S rRNA. In Campylobacter jejuni subsp. doylei (strain ATCC BAA-1458 / RM4099 / 269.97), this protein is Putative pre-16S rRNA nuclease.